We begin with the raw amino-acid sequence, 415 residues long: Mannosylglycerate hydrolase (415 aa).

Residues tyrosine 23, 27–30 (WLWD), tyrosine 76, glutamine 98, and glycine 158 each bind substrate. The active-site Proton donor is the aspartate 160. Residues arginine 193 and 344–345 (YW) contribute to the substrate site. Residue glutamate 388 is the Proton acceptor of the active site.

The protein belongs to the glycosyl hydrolase 63 family. Homotetramer in solution.

It catalyses the reaction (2R)-2-O-(alpha-D-mannosyl)-glycerate + H2O = D-mannose + (R)-glycerate. The catalysed reaction is (2R)-2-O-(alpha-D-glucopyranosyl)-glycerate + H2O = (R)-glycerate + D-glucose. Activity is not stimulated by divalent cations and not affected in the presence of EDTA. Hydrolase that catalyzes the hydrolysis of mannosylglycerate (MG), a solute produced in response to osmotic stress in thermophiles, into mannose and glycerate. Can also hydrolyze glucosylglycerate (GG) to glucose and glycerate, with similar catalytic efficiency. Is highly specific for MG and GG, and cannot use mannosylglyceramide (MGA), glucosylglycerol, mannosylglucosylglycerate (MGG), glucosylglucosylglycerate (GGG) or trehalose as substrates. The chain is Mannosylglycerate hydrolase from Thermus thermophilus (strain ATCC BAA-163 / DSM 7039 / HB27).